Reading from the N-terminus, the 27-residue chain is Metallothionein-like protein CAP5 (27 aa).

The span at 1–18 shows a compositional bias: low complexity; the sequence is MAPCSCKSCGTSCAGSCT. Residues 1–27 are disordered; it reads MAPCSCKSCGTSCAGSCTSCSCGSCSH. 7 residues coordinate Cu(+): Cys-4, Cys-6, Cys-9, Cys-13, Cys-20, Cys-22, and Cys-25.

The protein belongs to the metallothionein superfamily. Type 8 family.

The protein is Metallothionein-like protein CAP5 (CAP5) of Colletotrichum gloeosporioides (Anthracnose fungus).